The sequence spans 48 residues: Palustrin-3a (48 aa).

Residues Cys43 and Cys48 are joined by a disulfide bond.

In terms of tissue distribution, expressed by the skin glands.

The protein resides in the secreted. In terms of biological role, antimicrobial activity against Gram-negative bacterium E.coli. In Lithobates palustris (Pickerel frog), this protein is Palustrin-3a.